A 171-amino-acid chain; its full sequence is Translationally-controlled tumor protein homolog (171 aa).

A TCTP domain is found at 1–171 (MIIYRDCISQ…FKDGLEMEKC (171 aa)).

This sequence belongs to the TCTP family. Expressed by the venom gland.

The protein localises to the secreted. In terms of biological role, venom protein that causes edema, enhances vascular permeability and is likely related to the inflammatory activity of the venom. The sequence is that of Translationally-controlled tumor protein homolog from Micrurus fulvius (Eastern coral snake).